The primary structure comprises 279 residues: Large ribosomal subunit protein uL2 (279 aa).

2 disordered regions span residues methionine 1–lysine 28 and arginine 221–arginine 279. Positions glycine 12–aspartate 22 are enriched in polar residues.

This sequence belongs to the universal ribosomal protein uL2 family. Part of the 50S ribosomal subunit. Forms a bridge to the 30S subunit in the 70S ribosome.

Functionally, one of the primary rRNA binding proteins. Required for association of the 30S and 50S subunits to form the 70S ribosome, for tRNA binding and peptide bond formation. It has been suggested to have peptidyltransferase activity; this is somewhat controversial. Makes several contacts with the 16S rRNA in the 70S ribosome. The protein is Large ribosomal subunit protein uL2 of Rubrobacter xylanophilus (strain DSM 9941 / JCM 11954 / NBRC 16129 / PRD-1).